The chain runs to 354 residues: Anthranilate phosphoribosyltransferase (354 aa).

5-phospho-alpha-D-ribose 1-diphosphate is bound by residues G94, 97-98 (GD), T102, 104-107 (NIST), 122-130 (KHGNRAASS), and S134. G94 is a binding site for anthranilate. A Mg(2+)-binding site is contributed by S106. Position 125 (N125) interacts with anthranilate. R180 provides a ligand contact to anthranilate. Residues D238 and E239 each contribute to the Mg(2+) site.

Belongs to the anthranilate phosphoribosyltransferase family. Homodimer. It depends on Mg(2+) as a cofactor.

It catalyses the reaction N-(5-phospho-beta-D-ribosyl)anthranilate + diphosphate = 5-phospho-alpha-D-ribose 1-diphosphate + anthranilate. The protein operates within amino-acid biosynthesis; L-tryptophan biosynthesis; L-tryptophan from chorismate: step 2/5. Functionally, catalyzes the transfer of the phosphoribosyl group of 5-phosphorylribose-1-pyrophosphate (PRPP) to anthranilate to yield N-(5'-phosphoribosyl)-anthranilate (PRA). This chain is Anthranilate phosphoribosyltransferase, found in Streptomyces avermitilis (strain ATCC 31267 / DSM 46492 / JCM 5070 / NBRC 14893 / NCIMB 12804 / NRRL 8165 / MA-4680).